The following is an 89-amino-acid chain: MALTVEEKAQIVNEYKQAEGDTGSPEVQVALLTANINKLQDHFKANGKDHHSRRGLIRMVNQRRKLLDYLKGKDTTRYSTLIGRLGLRR.

The protein belongs to the universal ribosomal protein uS15 family. Part of the 30S ribosomal subunit. Forms a bridge to the 50S subunit in the 70S ribosome, contacting the 23S rRNA.

In terms of biological role, one of the primary rRNA binding proteins, it binds directly to 16S rRNA where it helps nucleate assembly of the platform of the 30S subunit by binding and bridging several RNA helices of the 16S rRNA. Functionally, forms an intersubunit bridge (bridge B4) with the 23S rRNA of the 50S subunit in the ribosome. In Azotobacter vinelandii (strain DJ / ATCC BAA-1303), this protein is Small ribosomal subunit protein uS15.